Reading from the N-terminus, the 305-residue chain is MQLLLALLALAYVAPSTEDSGWCYEIQTKDPRSSCLGPEKWPGACKENQQSPINIVTARTKVNPRLTPFILVGYDQKQQWPIKNNQHTVEMTLGGGACIIGGDLPARYEAVQLHLHWSNGNDNGSEHSIDGRHFAMEMHIVHKKLTSSKEDSKDKFAVLAFMIEVGDKVNKGFQPLVEALPSISKPHSTSTVRESSLQDMLPPSTKMYTYFRYNGSLTTPNCDETVIWTVYKQPIKIHKNQFLEFSKNLYYDEDQKLNMKDNVRPLQPLGKRQVFKSHAPGQLLSLPLPTLLVPTLTCLVANFLQ.

Residues Met-1–Thr-17 form the signal peptide. Residues Ser-20–His-278 form the Alpha-carbonic anhydrase domain. Cystine bridges form between Cys-23–Cys-35 and Cys-45–Cys-222. His-87 acts as the Proton donor/acceptor in catalysis. Residues His-114 and His-116 each coordinate Zn(2+). N-linked (GlcNAc...) asparagine glycosylation occurs at Asn-123. His-139 contributes to the Zn(2+) binding site. Residue Asn-214 is glycosylated (N-linked (GlcNAc...) asparagine). Thr-218–Thr-219 contributes to the substrate binding site. Ser-277 carries GPI-anchor amidated serine lipidation. The propeptide at His-278–Gln-305 is removed in mature form.

The protein belongs to the alpha-carbonic anhydrase family. Interacts with SLC4A4. Zn(2+) serves as cofactor.

The protein localises to the cell membrane. The enzyme catalyses hydrogencarbonate + H(+) = CO2 + H2O. Inhibited by acetazolamide. Catalyzes the reversible hydration of carbon dioxide into bicarbonate and protons and thus is essential to maintaining intracellular and extracellular pH. May stimulate the sodium/bicarbonate transporter activity of SLC4A4 that acts in pH homeostasis. It is essential for acid overload removal from the retina and retina epithelium, and acid release in the choriocapillaris in the choroid. This Mus musculus (Mouse) protein is Carbonic anhydrase 4 (Ca4).